A 1378-amino-acid chain; its full sequence is S-cell enriched with leucine-rich repeat-containing protein slrA (1378 aa).

Residues 17 to 37 (IFKILYCYLFTSLLLILSTWV) form a helical membrane-spanning segment. 5 N-linked (GlcNAc...) asparagine glycosylation sites follow: N59, N112, N143, N172, and N201. LRR repeat units follow at residues 143 to 165 (NLTGIDLSNNNLKGNITPYLPYL), 167 to 188 (HLRNLNLSNNHLSGCFPDGLLK), 191 to 212 (SLVALDLSYNNISCTLSLADSK), 213 to 235 (AISYIDISHNHLTGYFKNVWKTP), 236 to 257 (NLLFLDLSFNKLYGTILKEFFR), 260 to 281 (SLDYVNLSSNQLIGFLPILSKS), 282 to 304 (RISYLNISNNRLIGNITLLTCWK), 307 to 329 (SLRIFDAENNMFEGALPESIFDH), and 331 to 353 (PLQYVNLKGNIVKDPLPSILDCA). Residues N265, N287, and N296 are each glycosylated (N-linked (GlcNAc...) asparagine). N416, N436, N451, N491, N513, N596, N605, N634, N704, N710, N740, N741, N771, N788, N801, N826, N843, N861, N875, and N907 each carry an N-linked (GlcNAc...) asparagine glycan. A coiled-coil region spans residues 886–946 (SLNNNNNNNN…NNNENNNENK (61 aa)). Residues 891–909 (NNNNNNNNNKNNNNNNNDS) show a composition bias toward low complexity. Residues 891-945 (NNNNNNNNNKNNNNNNNDSNNEKEVVEDEEEDLDYSSQNDNNNINNNNNENNNEN) form a disordered region. The segment covering 915–924 (VVEDEEEDLD) has biased composition (acidic residues). Low complexity predominate over residues 929 to 945 (NDNNNINNNNNENNNEN). 4 N-linked (GlcNAc...) asparagine glycosylation sites follow: N953, N970, N1090, and N1100. Residues 1160 to 1180 (YYIVFFGCASGLILVLVICIV) traverse the membrane as a helical segment. Residues 1227 to 1276 (DLNNNNNNNNNNNNNNNNNNNNNNNNNNNNNNNNNFNDGSDTFNNNNKKN) are compositionally biased toward low complexity. Positions 1227-1378 (DLNNNNNNNN…KKHLTIINKK (152 aa)) are disordered. Residues 1289–1304 (DGKENDIKNINNKKDE) show a composition bias toward basic and acidic residues. A compositionally biased stretch (acidic residues) spans 1305–1324 (KEDDGDDDDDEDDDEYEDDT). Low complexity predominate over residues 1328-1353 (SSGNSSRSKGSDGGSSSNSLSSDKQS). N-linked (GlcNAc...) asparagine glycans are attached at residues N1331 and N1360. Residues 1354–1364 (FNNGNENNSII) show a composition bias toward polar residues. Over residues 1368–1378 (KKKHLTIINKK) the composition is skewed to basic residues.

Its subcellular location is the membrane. The sequence is that of S-cell enriched with leucine-rich repeat-containing protein slrA (slrA) from Dictyostelium discoideum (Social amoeba).